The following is a 376-amino-acid chain: Probable deoxyhypusine synthase (376 aa).

Residues 105–109 (SNLVS), 131–133 (TAG), Glu137, and Asp238 each bind NAD(+). 136–137 (EE) provides a ligand contact to spermidine. Residue Asp243 participates in spermidine binding. Position 283 (Gly283) interacts with NAD(+). Position 288 (His288) interacts with spermidine. Residue 308–309 (TG) coordinates NAD(+). Spermidine-binding positions include 314–316 (GSD) and 323–329 (EAVSWGK). Lys329 (nucleophile) is an active-site residue. 342–343 (EA) is a binding site for NAD(+).

Belongs to the deoxyhypusine synthase family. NAD(+) is required as a cofactor.

It catalyses the reaction [eIF5A protein]-L-lysine + spermidine = [eIF5A protein]-deoxyhypusine + propane-1,3-diamine. It functions in the pathway protein modification; eIF5A hypusination. Catalyzes the NAD-dependent oxidative cleavage of spermidine and the subsequent transfer of the butylamine moiety of spermidine to the epsilon-amino group of a critical lysine residue of the eIF-5A precursor protein to form the intermediate deoxyhypusine residue. This is the first step of the post-translational modification of that lysine into an unusual amino acid residue named hypusine. Hypusination is unique to mature eIF-5A factor and is essential for its function. The chain is Probable deoxyhypusine synthase (dhps) from Dictyostelium discoideum (Social amoeba).